The sequence spans 356 residues: UDP-N-acetylglucosamine--N-acetylmuramyl-(pentapeptide) pyrophosphoryl-undecaprenol N-acetylglucosamine transferase (356 aa).

Residues 11 to 13 (TAG), Asn-123, Arg-159, and Ser-192 each bind UDP-N-acetyl-alpha-D-glucosamine.

It belongs to the glycosyltransferase 28 family. MurG subfamily.

The protein resides in the cell membrane. It carries out the reaction di-trans,octa-cis-undecaprenyl diphospho-N-acetyl-alpha-D-muramoyl-L-alanyl-D-glutamyl-meso-2,6-diaminopimeloyl-D-alanyl-D-alanine + UDP-N-acetyl-alpha-D-glucosamine = di-trans,octa-cis-undecaprenyl diphospho-[N-acetyl-alpha-D-glucosaminyl-(1-&gt;4)]-N-acetyl-alpha-D-muramoyl-L-alanyl-D-glutamyl-meso-2,6-diaminopimeloyl-D-alanyl-D-alanine + UDP + H(+). It participates in cell wall biogenesis; peptidoglycan biosynthesis. In terms of biological role, cell wall formation. Catalyzes the transfer of a GlcNAc subunit on undecaprenyl-pyrophosphoryl-MurNAc-pentapeptide (lipid intermediate I) to form undecaprenyl-pyrophosphoryl-MurNAc-(pentapeptide)GlcNAc (lipid intermediate II). In Tropheryma whipplei (strain Twist) (Whipple's bacillus), this protein is UDP-N-acetylglucosamine--N-acetylmuramyl-(pentapeptide) pyrophosphoryl-undecaprenol N-acetylglucosamine transferase.